A 360-amino-acid polypeptide reads, in one-letter code: Phospho-N-acetylmuramoyl-pentapeptide-transferase (360 aa).

Helical transmembrane passes span 27 to 47, 73 to 93, 94 to 114, 132 to 152, 168 to 188, 199 to 219, 236 to 256, 263 to 283, 288 to 308, and 338 to 358; these read ILSI…LIAW, TMGG…WADL, TNPY…VGFV, WKYF…YAYG, VMPQ…VGTS, GLAI…AWAT, ASEL…FLWF, VFMG…IAVL, FLLV…ILQV, and VIVR…ATLK.

The protein belongs to the glycosyltransferase 4 family. MraY subfamily. Mg(2+) serves as cofactor.

The protein resides in the cell inner membrane. It catalyses the reaction UDP-N-acetyl-alpha-D-muramoyl-L-alanyl-gamma-D-glutamyl-meso-2,6-diaminopimeloyl-D-alanyl-D-alanine + di-trans,octa-cis-undecaprenyl phosphate = di-trans,octa-cis-undecaprenyl diphospho-N-acetyl-alpha-D-muramoyl-L-alanyl-D-glutamyl-meso-2,6-diaminopimeloyl-D-alanyl-D-alanine + UMP. It participates in cell wall biogenesis; peptidoglycan biosynthesis. Functionally, catalyzes the initial step of the lipid cycle reactions in the biosynthesis of the cell wall peptidoglycan: transfers peptidoglycan precursor phospho-MurNAc-pentapeptide from UDP-MurNAc-pentapeptide onto the lipid carrier undecaprenyl phosphate, yielding undecaprenyl-pyrophosphoryl-MurNAc-pentapeptide, known as lipid I. The protein is Phospho-N-acetylmuramoyl-pentapeptide-transferase of Aliivibrio fischeri (strain MJ11) (Vibrio fischeri).